A 313-amino-acid chain; its full sequence is Olfactory receptor 10P1 (313 aa).

The Extracellular segment spans residues 1–25 (MAGENHTTLPEFLLLGFSDLKALQG). A glycan (N-linked (GlcNAc...) asparagine) is linked at Asn-5. Residues 26-46 (PLFWVVLLVYLVTLLGNSLII) form a helical membrane-spanning segment. Over 47 to 54 (LLTQVSPA) the chain is Cytoplasmic. The chain crosses the membrane as a helical span at residues 55-75 (LHSPMYFFLRQLSVVELFYTT). At 76-100 (DIVPRTLANLGSPHPQAISFQGCAA) the chain is on the extracellular side. The chain crosses the membrane as a helical span at residues 101-121 (QMYVFIVLGISECCLLTAMAY). Over 122 to 140 (DRYVAICQPLRYSTLLSPR) the chain is Cytoplasmic. Residues 141 to 161 (ACMAMVGTSWLTGIITATTHA) traverse the membrane as a helical segment. At 162–198 (SLIFSLPFRSHPIIPHFLCDILPVLRLASAGKHRSEI) the chain is on the extracellular side. The chain crosses the membrane as a helical span at residues 199-218 (SVMTATIVFIMIPFSLIVTS). At 219–238 (YIRILGAILAMASTQSRRKV) the chain is on the cytoplasmic side. A helical membrane pass occupies residues 239–259 (FSTCSSHLLVVSLFFGTASIT). Residues 260-272 (YIRPQAGSSVTTD) are Extracellular-facing. A helical membrane pass occupies residues 273-293 (RVLSLFYTVITPMLNPIIYTL). The Cytoplasmic portion of the chain corresponds to 294 to 313 (RNKDVRRALRHLVKRQRPSP).

Belongs to the G-protein coupled receptor 1 family.

The protein resides in the cell membrane. Its function is as follows. Odorant receptor. The sequence is that of Olfactory receptor 10P1 (OR10P1) from Homo sapiens (Human).